The sequence spans 395 residues: Acid ceramidase (395 aa).

The N-terminal stretch at 1 to 21 (MLGRSRLTFVLLSVTVTCSVA) is a signal peptide. The cysteines at positions 31 and 340 are disulfide-linked. Residue C143 is the Nucleophile of the active site. N-linked (GlcNAc...) asparagine glycans are attached at residues N173, N259, N342, and N348. The cysteines at positions 388 and 392 are disulfide-linked.

The protein belongs to the acid ceramidase family. As to quaternary structure, heterodimer; disulfide-linked. The heterodimer is composed of the disulfide-linked alpha and beta chains produced by autocatalytic cleavage of the precursor. N-glycosylated. Post-translationally, proteolytically cleaved into two chains alpha and beta that remain associated via a disulfide bond. Cleavage gives rise to a conformation change that activates the enzyme. The same catalytic Cys residue mediates the autoproteolytic cleavage and subsequent hydrolysis of lipid substrates. The beta chain may undergo an additional C-terminal processing.

It is found in the lysosome. The protein resides in the secreted. It carries out the reaction an N-acylsphing-4-enine + H2O = sphing-4-enine + a fatty acid. The enzyme catalyses N-dodecanoylsphing-4-enine + H2O = dodecanoate + sphing-4-enine. The catalysed reaction is N-tetradecanoylsphing-4-enine + H2O = tetradecanoate + sphing-4-enine. It catalyses the reaction N-hexadecanoylsphing-4-enine + H2O = sphing-4-enine + hexadecanoate. It carries out the reaction N-octadecanoylsphing-4-enine + H2O = sphing-4-enine + octadecanoate. The enzyme catalyses N-dodecanoyl-(4R)-hydroxysphinganine + H2O = (4R)-hydroxysphinganine + dodecanoate. The catalysed reaction is N-(dodecanoyl)-sphinganine + H2O = dodecanoate + sphinganine. It catalyses the reaction N-(acetyl)-sphing-4-enine + H2O = sphing-4-enine + acetate. It carries out the reaction N-(hexanoyl)sphing-4-enine + H2O = hexanoate + sphing-4-enine. The enzyme catalyses N-octanoylsphing-4-enine + H2O = octanoate + sphing-4-enine. The catalysed reaction is N-(9Z-octadecenoyl)-sphing-4-enine + H2O = sphing-4-enine + (9Z)-octadecenoate. It catalyses the reaction N-dodecanoylethanolamine + H2O = dodecanoate + ethanolamine. Its pathway is lipid metabolism; sphingolipid metabolism. Lysosomal ceramidase that hydrolyzes sphingolipid ceramides into sphingosine and free fatty acids at acidic pH. Ceramides, sphingosine, and its phosphorylated form sphingosine-1-phosphate are bioactive lipids that mediate cellular signaling pathways regulating several biological processes including cell proliferation, apoptosis and differentiation. Has a higher catalytic efficiency towards C12-ceramides versus other ceramides. Also catalyzes the reverse reaction allowing the synthesis of ceramides from fatty acids and sphingosine. For the reverse synthetic reaction, the natural sphingosine D-erythro isomer is more efficiently utilized as a substrate compared to D-erythro-dihydrosphingosine and D-erythro-phytosphingosine, while the fatty acids with chain lengths of 12 or 14 carbons are the most efficiently used. Also has an N-acylethanolamine hydrolase activity. By regulating the levels of ceramides, sphingosine and sphingosine-1-phosphate in the epidermis, mediates the calcium-induced differentiation of epidermal keratinocytes. Also indirectly regulates tumor necrosis factor/TNF-induced apoptosis. By regulating the intracellular balance between ceramides and sphingosine, in adrenocortical cells, probably also acts as a regulator of steroidogenesis. The sequence is that of Acid ceramidase from Balaenoptera acutorostrata scammoni (North Pacific minke whale).